Consider the following 1418-residue polypeptide: Alpha-latrotoxin-Lhe1a (1418 aa).

The N-terminal stretch at 1–20 (MIFVGETMERANHSLVRLRR) is a signal peptide. A furin-like endopeptidase recognition region region spans residues 17 to 20 (RLRR). A helix H8 is the probable transmembrane region of the tetrameric pore inserted in the target cell membrane region spans residues 238–257 (VLYALLYGTQTYISVMFFLL). A disulfide bridge links C413 with C1066. 22 ANK repeats span residues 458–489 (LYNA…ATFD), 490–521 (QGRT…ELNQ), 525–554 (KGYT…SINS), 559–589 (FLQT…NINE), 593–622 (DGFT…DVNA), 626–656 (KGLT…DINA), 660–690 (NNMT…NANV), 695–723 (GLLS…NVNV), 729–758 (GGIT…NIEQ), 762–791 (EKYT…NFEA), 795–824 (SGAT…NWRD), 828–857 (NGQM…TVLD), 862–891 (NSDT…DINT), 895–924 (NGHA…NVYI), 928–957 (NGMN…KFEW), 971–1003 (EECA…GNFN), 1004–1033 (ICGP…SVDG), 1035–1064 (KTDT…KVNH), 1068–1097 (NGMT…DFRR), 1101–1131 (RGAT…DINI), 1137–1166 (DKET…DVTI), and 1170–1199 (YDKT…KFRR). A 4C4.1 epitope region spans residues 1026 to 1032 (EEVLSVD). Positions 1196–1199 (KFRR) are furin-like endopeptidase recognition region. A propeptide spanning residues 1200–1418 (EYKSSYGEHS…SEKKIQKISI (219 aa)) is cleaved from the precursor.

The protein belongs to the cationic peptide 01 (latrotoxin) family. 03 (alpha-latrotoxin) subfamily. Homotetramer in membranes. Post-translationally, processed by furin-like proteases at both the N- and C-termini. As to expression, expressed in venom gland, cephalothorax, and abdomen tissues from both males and females.

The protein resides in the secreted. The protein localises to the target cell membrane. Functionally, presynaptic neurotoxin that causes massive release of neurotransmitters from vertebrate (but not invertebrate) nerve terminals and endocrine cells via a complex mechanism involving activation of receptor(s) and toxin insertion into the plasma membrane with subsequent pore formation. Binds to neurexin-1-alpha (NRXN1) in a calcium dependent manner, adhesion G protein-coupled receptor L1 (ADGRL1, also termed latrophilin-1 and calcium-independent receptor of latrotoxin (CIRL)), and receptor-type tyrosine-protein phosphatase S (PTPRS), also termed PTP sigma. NRXN1 and PTPRS are suggested to provide a platform for binding and subsequent pore formation events. In contrast, binding to ADGRL1 does not involve oligomerization and channel formation, but direct downstream stimulation of the synaptic fusion machinery. This is Alpha-latrotoxin-Lhe1a from Latrodectus hesperus (Western black widow spider).